The following is a 292-amino-acid chain: N-acetylneuraminate lyase (292 aa).

Residues serine 46 and threonine 47 each contribute to the aceneuramate site. Tyrosine 135 functions as the Proton donor in the catalytic mechanism. The active-site Schiff-base intermediate with substrate is lysine 163. Aceneuramate is bound by residues threonine 165, glycine 187, aspartate 189, glutamate 190, and serine 206.

The protein belongs to the DapA family. NanA subfamily. As to quaternary structure, homotetramer.

Its subcellular location is the cytoplasm. It catalyses the reaction aceneuramate = aldehydo-N-acetyl-D-mannosamine + pyruvate. It participates in amino-sugar metabolism; N-acetylneuraminate degradation; D-fructose 6-phosphate from N-acetylneuraminate: step 1/5. Its function is as follows. Catalyzes the reversible aldol cleavage of N-acetylneuraminic acid (sialic acid; Neu5Ac) to form pyruvate and N-acetylmannosamine (ManNAc) via a Schiff base intermediate. The chain is N-acetylneuraminate lyase from Lactiplantibacillus plantarum (strain ATCC BAA-793 / NCIMB 8826 / WCFS1) (Lactobacillus plantarum).